Consider the following 164-residue polypeptide: NADH-quinone oxidoreductase subunit I (164 aa).

4Fe-4S ferredoxin-type domains lie at 55–84 (RRYE…IEID) and 95–124 (KVYD…MGPY). [4Fe-4S] cluster contacts are provided by cysteine 64, cysteine 67, cysteine 70, cysteine 74, cysteine 104, cysteine 107, cysteine 110, and cysteine 114.

The protein belongs to the complex I 23 kDa subunit family. NDH-1 is composed of 14 different subunits. Subunits NuoA, H, J, K, L, M, N constitute the membrane sector of the complex. [4Fe-4S] cluster is required as a cofactor.

The protein resides in the cell inner membrane. The enzyme catalyses a quinone + NADH + 5 H(+)(in) = a quinol + NAD(+) + 4 H(+)(out). Its function is as follows. NDH-1 shuttles electrons from NADH, via FMN and iron-sulfur (Fe-S) centers, to quinones in the respiratory chain. The immediate electron acceptor for the enzyme in this species is believed to be ubiquinone. Couples the redox reaction to proton translocation (for every two electrons transferred, four hydrogen ions are translocated across the cytoplasmic membrane), and thus conserves the redox energy in a proton gradient. In Magnetococcus marinus (strain ATCC BAA-1437 / JCM 17883 / MC-1), this protein is NADH-quinone oxidoreductase subunit I.